The primary structure comprises 61 residues: Large ribosomal subunit protein bL28 (61 aa).

Residues 1-26 (MAKDFINGKRTQFGNKRSHALNSSRR) are disordered. Positions 9–25 (KRTQFGNKRSHALNSSR) are enriched in polar residues.

It belongs to the bacterial ribosomal protein bL28 family.

This chain is Large ribosomal subunit protein bL28, found in Limosilactobacillus reuteri (strain DSM 20016) (Lactobacillus reuteri).